Here is a 235-residue protein sequence, read N- to C-terminus: Large ribosomal subunit protein uL1 (235 aa).

This sequence belongs to the universal ribosomal protein uL1 family. In terms of assembly, part of the 50S ribosomal subunit.

Functionally, binds directly to 23S rRNA. The L1 stalk is quite mobile in the ribosome, and is involved in E site tRNA release. Protein L1 is also a translational repressor protein, it controls the translation of the L11 operon by binding to its mRNA. The sequence is that of Large ribosomal subunit protein uL1 from Mycolicibacterium vanbaalenii (strain DSM 7251 / JCM 13017 / BCRC 16820 / KCTC 9966 / NRRL B-24157 / PYR-1) (Mycobacterium vanbaalenii).